The chain runs to 253 residues: Uridylate kinase (253 aa).

Residue 9–12 coordinates ATP; sequence KLSG. A UMP-binding site is contributed by glycine 51. Positions 52 and 56 each coordinate ATP. Residues aspartate 72 and 133-140 contribute to the UMP site; that span reads SGNPFFTT. ATP is bound by residues threonine 160, tyrosine 166, and aspartate 169.

This sequence belongs to the UMP kinase family. In terms of assembly, homohexamer.

It localises to the cytoplasm. It catalyses the reaction UMP + ATP = UDP + ADP. It participates in pyrimidine metabolism; CTP biosynthesis via de novo pathway; UDP from UMP (UMPK route): step 1/1. Inhibited by UTP. Its function is as follows. Catalyzes the reversible phosphorylation of UMP to UDP. The protein is Uridylate kinase of Synechococcus sp. (strain JA-2-3B'a(2-13)) (Cyanobacteria bacterium Yellowstone B-Prime).